The following is a 185-amino-acid chain: Large ribosomal subunit protein uL6m (185 aa).

Belongs to the universal ribosomal protein uL6 family.

Its subcellular location is the mitochondrion. This chain is Large ribosomal subunit protein uL6m (RPL6), found in Reclinomonas americana.